Reading from the N-terminus, the 233-residue chain is 6-carboxyhexanoate--CoA ligase (233 aa).

Belongs to the BioW family. As to quaternary structure, homodimer. Requires Mg(2+) as cofactor.

The enzyme catalyses heptanedioate + ATP + CoA = 6-carboxyhexanoyl-CoA + AMP + diphosphate. It participates in metabolic intermediate metabolism; pimeloyl-CoA biosynthesis; pimeloyl-CoA from pimelate: step 1/1. Its function is as follows. Catalyzes the transformation of pimelate into pimeloyl-CoA with concomitant hydrolysis of ATP to AMP. The sequence is that of 6-carboxyhexanoate--CoA ligase from Methanocaldococcus sp. (strain FS406-22).